The chain runs to 2551 residues: Piezo-type mechanosensitive ion channel component (2551 aa).

A run of 8 helical transmembrane segments spans residues 5 to 25 (YACMVLQRIVVPAVLVLAALM), 27 to 47 (PVGISFVYLLMFFVSPFVPLA), 56 to 76 (VTAFFIILLTLSTLVLLGHIT), 106 to 126 (FIDLQPFAIIEWLVPEVLVFA), 204 to 226 (IHFEGLVKISPLFCLATLFFAAV), 231 to 250 (VPGGFYFLIFLLSGTYWATC), 256 to 276 (GFALLLRCVMVVLVLHSLSIV), and 320 to 340 (LSLDSYLNPFALFFAYFALAL). The interval 354-375 (STRKARTPQPLESGSSVAPSVT) is disordered. The segment covering 363-375 (PLESGSSVAPSVT) has biased composition (polar residues). A run of 9 helical transmembrane segments spans residues 395–415 (TTTSILDQISYGFVSVGGFIY), 424–444 (ILMMAWSIVYHSWLTFVLLLS), 463–483 (PFIVLYAEALLIAQYIYGMDL), 516–536 (VPLIVKTAFVLMFWVTSRQFF), 548–568 (LADFIAPLQITVGSAGSSYLI), 588–608 (LLVRLWIWLLVLVIFLCAITG), 611–631 (MTGFRICYMALFLFFLLVFQS), 639–659 (IMYGFWLFLIFYAMSILILIY), and 695–715 (FLHLVSPTIIVILTVIQVHYF). Residues 731 to 741 (GSAQQKPTETT) are compositionally biased toward polar residues. The disordered stretch occupies residues 731–772 (GSAQQKPTETTALEPAPSKRRGSAGSLRKSQGPSAEAAPGAT). 12 consecutive transmembrane segments (helical) span residues 819–839 (IAAFVCSVSEVCVLHIIFVGF), 857–877 (LISFIVTVIVLSKMIYQIEYL), 910–930 (LMSLLRTYIIYMVIVTMHAVI), 973–993 (LNFGFYKFGIEISLIALVSTI), 994–1014 (TYRQDIVAVVYALWLVVLLLL), 1022–1042 (IWGVFQAFFAISILTQYIVLV), 1071–1091 (GALHFNHVPKLIFDFIVLVIL), 1152–1172 (VLCGFYWFTLAVVFLAGTNIA), 1174–1194 (LLALGYLIGAFIFLWQGSDFY), 1198–1218 (IHTIIFRWKWLLAFNVANILI), 1239–1259 (WLVHMLGITCTSNVLTEQIML), and 1275–1295 (ITHQVVLLWDTICFAFIIFQL). Disordered regions lie at residues 1426–1521 (NITE…AKDS) and 1592–1658 (ESDE…PQQQ). Over residues 1430–1448 (SEMKMQRRKTLYDKSKDAP) the composition is skewed to basic and acidic residues. The span at 1466–1477 (ATASSSASPAPT) shows a compositional bias: low complexity. Positions 1497 to 1511 (QTSKETSDSKSKMEV) are enriched in basic and acidic residues. Low complexity-rich tracts occupy residues 1621–1634 (PTSTTLNTNTTTTP) and 1644–1658 (LQPLQPNTTSTPQQQ). Helical transmembrane passes span 1718–1738 (ISSWYALLANTDLICYIVVFI), 1741–1761 (VVNASLISLPLPIMVFLWGTL), 1770–1790 (FWVTLIAYTQAIVLIKCIFQF), and 1817–1837 (AHYAIYDLILLLVLFLHRYLL). A disordered region spans residues 1854-1876 (FTKPTASIDERDDSDNLSQPDSR). The next 7 helical transmembrane spans lie at 1937–1957 (ALMFLCDFVNFFVLLFGFTAF), 1979–1999 (IPFLIMLLVQFLLIVIDRALY), 2008–2028 (IIFHFFSVIGIHIWMFFVVPA), 2033–2053 (TFNSLAPPIIFYVIKCFYMLL), 2075–2095 (FSMVNMIAFKVYMQIPFLYEL), 2151–2171 (IMGGTIVLLIVICIWGPLCLF), and 2431–2451 (TFSFLTAGGIIGLYTTFVLLA). Residues 2522 to 2551 (EYVDDDGDTDSIPSRMSVRRPEQLQPQQPQ) form a disordered region.

The protein belongs to the PIEZO (TC 1.A.75) family.

Its subcellular location is the cell membrane. Component of a mechanosensitive channel required for rapidly adapting mechanically activated (MA) currents. Plays a major role in nociception (response to strong or painful touch). Required for maintaining the mechanosensitivity of tarsal bristle mechanosensors. During their evalulation of potential egg-laying sites, females determine the softest substrate for their eggs first by making a coarse evaluation of substrate hardness using mechanosensitive channels nan and Piezo in the leg tarsal bristles, followed by a much finer assessment using nan, iav and Tmc mechanosensitive channels on the labellum. Acts in the nompC- and nan-expressing neurons of the female leg tarsals, to sense the mild differences in egg-laying substrate stiffness. The polypeptide is Piezo-type mechanosensitive ion channel component (Drosophila melanogaster (Fruit fly)).